The following is a 312-amino-acid chain: Ribonuclease Z (312 aa).

Residues His-63, His-65, Asp-67, His-68, His-140, Asp-211, and His-269 each coordinate Zn(2+). Asp-67 acts as the Proton acceptor in catalysis.

The protein belongs to the RNase Z family. As to quaternary structure, homodimer. Requires Zn(2+) as cofactor.

It catalyses the reaction Endonucleolytic cleavage of RNA, removing extra 3' nucleotides from tRNA precursor, generating 3' termini of tRNAs. A 3'-hydroxy group is left at the tRNA terminus and a 5'-phosphoryl group is left at the trailer molecule.. Zinc phosphodiesterase, which displays some tRNA 3'-processing endonuclease activity. Probably involved in tRNA maturation, by removing a 3'-trailer from precursor tRNA. The protein is Ribonuclease Z of Shouchella clausii (strain KSM-K16) (Alkalihalobacillus clausii).